The chain runs to 277 residues: NAD kinase (277 aa).

Aspartate 67 functions as the Proton acceptor in the catalytic mechanism. NAD(+) contacts are provided by residues aspartate 67–glycine 68, arginine 72, asparagine 137–glutamate 138, lysine 148, arginine 165, aspartate 167, threonine 178–serine 183, leucine 202, and glutamine 236.

This sequence belongs to the NAD kinase family. It depends on a divalent metal cation as a cofactor.

It localises to the cytoplasm. It carries out the reaction NAD(+) + ATP = ADP + NADP(+) + H(+). Involved in the regulation of the intracellular balance of NAD and NADP, and is a key enzyme in the biosynthesis of NADP. Catalyzes specifically the phosphorylation on 2'-hydroxyl of the adenosine moiety of NAD to yield NADP. This is NAD kinase from Pyrococcus abyssi (strain GE5 / Orsay).